Here is a 175-residue protein sequence, read N- to C-terminus: NADH-ubiquinone oxidoreductase chain 6 (175 aa).

5 helical membrane passes run 1–21 (MMTY…VGFS), 25–45 (SPIY…GIVL), 47–67 (FGGS…MLVV), 88–108 (AVLG…CYIL), and 149–169 (YGTW…LVIM).

The protein belongs to the complex I subunit 6 family. Core subunit of respiratory chain NADH dehydrogenase (Complex I) which is composed of 45 different subunits.

It localises to the mitochondrion inner membrane. It carries out the reaction a ubiquinone + NADH + 5 H(+)(in) = a ubiquinol + NAD(+) + 4 H(+)(out). Its function is as follows. Core subunit of the mitochondrial membrane respiratory chain NADH dehydrogenase (Complex I) which catalyzes electron transfer from NADH through the respiratory chain, using ubiquinone as an electron acceptor. Essential for the catalytic activity and assembly of complex I. The sequence is that of NADH-ubiquinone oxidoreductase chain 6 (MT-ND6) from Halichoerus grypus (Gray seal).